A 362-amino-acid polypeptide reads, in one-letter code: Histidinol-phosphate aminotransferase (362 aa).

At K210 the chain carries N6-(pyridoxal phosphate)lysine.

This sequence belongs to the class-II pyridoxal-phosphate-dependent aminotransferase family. Histidinol-phosphate aminotransferase subfamily. Homodimer. It depends on pyridoxal 5'-phosphate as a cofactor.

The catalysed reaction is L-histidinol phosphate + 2-oxoglutarate = 3-(imidazol-4-yl)-2-oxopropyl phosphate + L-glutamate. It participates in amino-acid biosynthesis; L-histidine biosynthesis; L-histidine from 5-phospho-alpha-D-ribose 1-diphosphate: step 7/9. This is Histidinol-phosphate aminotransferase from Rhodopirellula baltica (strain DSM 10527 / NCIMB 13988 / SH1).